The following is a 215-amino-acid chain: Chaperone protein TorD (215 aa).

The protein belongs to the TorD/DmsD family. TorD subfamily.

It localises to the cytoplasm. In terms of biological role, involved in the biogenesis of TorA. Acts on TorA before the insertion of the molybdenum cofactor and, as a result, probably favors a conformation of the apoenzyme that is competent for acquiring the cofactor. The sequence is that of Chaperone protein TorD from Aliivibrio salmonicida (strain LFI1238) (Vibrio salmonicida (strain LFI1238)).